The primary structure comprises 876 residues: Radial spoke head 10 homolog B (876 aa).

2 stretches are compositionally biased toward basic and acidic residues: residues 1–16 (MVKE…DKSA) and 57–66 (PKRDSEHTYQ). Residues 1 to 72 (MVKEKKKADK…HTYQSEDETQ (72 aa)) form a disordered region. MORN repeat units follow at residues 86 to 108 (YEGE…GGNT), 109 to 131 (YHGM…DGLK), 132 to 154 (YEGD…DGST), 155 to 177 (YEGE…TQPV), 179 to 201 (YIGH…QEGT), 204 to 226 (YEGD…SGNI), 227 to 249 (YEGQ…TTNE), 251 to 273 (YTGH…LKRI), 284 to 306 (YIGA…SGAM), and 307 to 329 (YEGE…NGRV). 2 disordered regions span residues 360-386 (SQRS…LDGS) and 841-876 (EPPE…KKKK). Over residues 373-386 (ADREPETLRKLDGS) the composition is skewed to basic and acidic residues. Residues 752 to 841 (EKYEKSKDEQ…FELDITVLKE (90 aa)) adopt a coiled-coil conformation.

In terms of assembly, interacts with RSPH6A. Does not appear to be part of the axonemal radial spoke complexes 1 or 2.

It is found in the cytoplasm. Its subcellular location is the cytoskeleton. The protein resides in the cilium axoneme. The protein localises to the cell projection. It localises to the cilium. It is found in the flagellum. May function as part of the axonemal radial spoke complex 3 (RS3). Radial spoke complexes are important for ciliary motility. The sequence is that of Radial spoke head 10 homolog B (Rsph10b) from Rattus norvegicus (Rat).